Here is a 337-residue protein sequence, read N- to C-terminus: Ketol-acid reductoisomerase (NADP(+)) (337 aa).

The KARI N-terminal Rossmann domain maps to 1–183 (MAIETLYDSD…GGARAGVIPT (183 aa)). NADP(+)-binding positions include 26–29 (YGSQ), R49, S52, S54, and 84–87 (DTSQ). H109 is an active-site residue. NADP(+) is bound at residue G135. One can recognise a KARI C-terminal knotted domain in the interval 184-329 (TFKDETETDL…SQLRDLMSWV (146 aa)). The Mg(2+) site is built by D192, E196, E228, and E232. Residue S253 participates in substrate binding.

The protein belongs to the ketol-acid reductoisomerase family. Requires Mg(2+) as cofactor.

The enzyme catalyses (2R)-2,3-dihydroxy-3-methylbutanoate + NADP(+) = (2S)-2-acetolactate + NADPH + H(+). The catalysed reaction is (2R,3R)-2,3-dihydroxy-3-methylpentanoate + NADP(+) = (S)-2-ethyl-2-hydroxy-3-oxobutanoate + NADPH + H(+). It participates in amino-acid biosynthesis; L-isoleucine biosynthesis; L-isoleucine from 2-oxobutanoate: step 2/4. Its pathway is amino-acid biosynthesis; L-valine biosynthesis; L-valine from pyruvate: step 2/4. Involved in the biosynthesis of branched-chain amino acids (BCAA). Catalyzes an alkyl-migration followed by a ketol-acid reduction of (S)-2-acetolactate (S2AL) to yield (R)-2,3-dihydroxy-isovalerate. In the isomerase reaction, S2AL is rearranged via a Mg-dependent methyl migration to produce 3-hydroxy-3-methyl-2-ketobutyrate (HMKB). In the reductase reaction, this 2-ketoacid undergoes a metal-dependent reduction by NADPH to yield (R)-2,3-dihydroxy-isovalerate. This chain is Ketol-acid reductoisomerase (NADP(+)), found in Corynebacterium aurimucosum (strain ATCC 700975 / DSM 44827 / CIP 107346 / CN-1) (Corynebacterium nigricans).